The sequence spans 219 residues: 3,4-dihydroxy-2-butanone 4-phosphate synthase (219 aa).

D-ribulose 5-phosphate is bound by residues 37-38, D42, 150-154, and E174; these read RE and RRGHT. E38 lines the Mg(2+) pocket. Mg(2+) is bound at residue H153.

The protein belongs to the DHBP synthase family. In terms of assembly, homodimer. Mg(2+) is required as a cofactor. Requires Mn(2+) as cofactor.

The enzyme catalyses D-ribulose 5-phosphate = (2S)-2-hydroxy-3-oxobutyl phosphate + formate + H(+). The protein operates within cofactor biosynthesis; riboflavin biosynthesis; 2-hydroxy-3-oxobutyl phosphate from D-ribulose 5-phosphate: step 1/1. Functionally, catalyzes the conversion of D-ribulose 5-phosphate to formate and 3,4-dihydroxy-2-butanone 4-phosphate. The protein is 3,4-dihydroxy-2-butanone 4-phosphate synthase of Edwardsiella ictaluri (strain 93-146).